A 604-amino-acid chain; its full sequence is UvrABC system protein C (604 aa).

Residues Glu-14 to Ile-91 enclose the GIY-YIG domain. The UVR domain occupies Glu-202–Leu-237. The interval Gly-538–Gly-557 is disordered.

The protein belongs to the UvrC family. As to quaternary structure, interacts with UvrB in an incision complex.

Its subcellular location is the cytoplasm. Its function is as follows. The UvrABC repair system catalyzes the recognition and processing of DNA lesions. UvrC both incises the 5' and 3' sides of the lesion. The N-terminal half is responsible for the 3' incision and the C-terminal half is responsible for the 5' incision. In Chromohalobacter salexigens (strain ATCC BAA-138 / DSM 3043 / CIP 106854 / NCIMB 13768 / 1H11), this protein is UvrABC system protein C.